The chain runs to 134 residues: 16 kDa beta-galactoside-binding lectin (134 aa).

Methionine 1 is modified (N-acetylmethionine). A Galectin domain is found at 4–134; that stretch reads GLVVTQLDVQ…DFKVKAIKFS (131 aa). 69 to 75 serves as a coordination point for a beta-D-galactoside; sequence WGEEDRK.

As to quaternary structure, homodimer. In terms of tissue distribution, mainly in the liver (adult), mainly in the muscle (embryo).

Functionally, this protein binds beta-galactoside. Its physiological function is not yet known. It may be involved in the regulation of differentiation. In Gallus gallus (Chicken), this protein is 16 kDa beta-galactoside-binding lectin.